Here is a 118-residue protein sequence, read N- to C-terminus: T cell receptor gamma variable 3 (118 aa).

Residues 1-17 form the signal peptide; it reads MRWALLVLLAFLSPASQ. One can recognise an Ig-like domain in the interval 18–118; that stretch reads KSSNLEGRTK…GVYYCATWDR (101 aa). A disulfide bridge links C41 with C113. N106 carries N-linked (GlcNAc...) asparagine glycosylation.

As to quaternary structure, gamma-delta TR is a heterodimer composed of a gamma and delta chain; disulfide-linked. The gamma-delta TR is associated with the transmembrane signaling CD3 coreceptor proteins following the stoichiometry: a single gamma-delta TR heterodimer associates with one CD3D-CD3E heterodimer, one CD3G-CD3E heterodimer and one CD247 homodimer forming a stable octameric structure. Upon activation, gamma-delta TR complex associates with FCER1G to initiate intracellular signaling.

It is found in the cell membrane. Functionally, v region of the variable domain of T cell receptor (TR) gamma chain that participates in the antigen recognition. Gamma-delta TRs recognize a variety of self and foreign non-peptide antigens frequently expressed at the epithelial boundaries between the host and external environment, including endogenous lipids presented by MH-like protein CD1D and phosphoantigens presented by butyrophilin-like molecule BTN3A1. Upon antigen recognition induces rapid, innate-like immune responses involved in pathogen clearance and tissue repair. Binding of gamma-delta TR complex to antigen triggers phosphorylation of immunoreceptor tyrosine-based activation motifs (ITAMs) in the CD3 chains by the LCK and FYN kinases, allowing the recruitment, phosphorylation, and activation of ZAP70 that facilitates phosphorylation of the scaffolding proteins LCP2 and LAT. This lead to the formation of a supramolecular signalosome that recruits the phospholipase PLCG1, resulting in calcium mobilization and ERK activation, ultimately leading to T cell expansion and differentiation into effector cells. Gamma-delta TRs are produced through somatic rearrangement of a limited repertoire of variable (V), diversity (D), and joining (J) genes. The potential diversity of gamma-delta TRs is conferred by the unique ability to rearrange (D) genes in tandem and to utilize all three reading frames. The combinatorial diversity is considerably increased by the sequence exonuclease trimming and random nucleotide (N) region additions which occur during the V-(D)-J rearrangements. This is T cell receptor gamma variable 3 from Homo sapiens (Human).